A 302-amino-acid chain; its full sequence is F-box protein SKIP19 (302 aa).

The region spanning 16–63 (STNWTELPPELTSAILHRLGAIEILENAQKVCRSWRRVCKDPSMWRKI) is the F-box domain.

Part of a SCF (ASK-cullin-F-box) protein ligase complex. Interacts with CUL1 and SPK1B/ASK2.

It localises to the nucleus. Its pathway is protein modification; protein ubiquitination. Functionally, component of SCF(ASK-cullin-F-box) E3 ubiquitin ligase complexes, which may mediate the ubiquitination and subsequent proteasomal degradation of target proteins. This is F-box protein SKIP19 (SKIP19) from Arabidopsis thaliana (Mouse-ear cress).